The following is a 337-amino-acid chain: Large ribosomal subunit protein uL3 (337 aa).

Residues 1–20 form a disordered region; the sequence is MASIHRPKRGSLAFSPRKRA.

This sequence belongs to the universal ribosomal protein uL3 family. Part of the 50S ribosomal subunit. Forms a cluster with proteins L14 and L24e.

In terms of biological role, one of the primary rRNA binding proteins, it binds directly near the 3'-end of the 23S rRNA, where it nucleates assembly of the 50S subunit. In Methanosarcina acetivorans (strain ATCC 35395 / DSM 2834 / JCM 12185 / C2A), this protein is Large ribosomal subunit protein uL3.